The primary structure comprises 545 residues: Degenerin-like protein asic-2 (545 aa).

Residues 1 to 34 (MRGGGFVQIFKDFSNWSTVAVVPHVANANNKISR) lie on the Cytoplasmic side of the membrane. The chain crosses the membrane as a helical span at residues 35 to 55 (IFWIAIFLFVLGMFAYELYIL). Residues 56-457 (IAKFFSYPAT…NVINDLGGQA (402 aa)) lie on the Extracellular side of the membrane. A disulfide bridge connects residues Cys83 and Cys191. N-linked (GlcNAc...) asparagine glycosylation occurs at Asn201. 5 cysteine pairs are disulfide-bonded: Cys284–Cys370, Cys305–Cys366, Cys309–Cys364, Cys318–Cys343, and Cys320–Cys334. A glycan (N-linked (GlcNAc...) asparagine) is linked at Asn350. The helical transmembrane segment at 458–478 (GLWLGLSVISVVEMTGLMLVM) threads the bilayer. A GAS motif; ion selectivity filter motif is present at residues 462 to 464 (GLS). Topologically, residues 479–545 (GAFCVTGGAI…NKGDEEKKKK (67 aa)) are cytoplasmic. Basic and acidic residues-rich tracts occupy residues 514 to 523 (DHLEKKHGEM) and 534 to 545 (IENKGDEEKKKK). The interval 514-545 (DHLEKKHGEMESGSDGEVDDIENKGDEEKKKK) is disordered.

Belongs to the amiloride-sensitive sodium channel (TC 1.A.6) family. Can form homotrimers. Heterotrimer; forms functional heterotrimers producing channel with different properties.

Its subcellular location is the cell membrane. The catalysed reaction is Na(+)(in) = Na(+)(out). Its activity is regulated as follows. Inhibited by the diuretic drug amiloride. Its function is as follows. Could form pH-gated heterotrimeric sodium channels that act as postsynaptic excitatory sensors in the nervous system, generating rapid, transient inward currents that fully desensitize upon extracellular acidification. The sequence is that of Degenerin-like protein asic-2 (asic-2) from Caenorhabditis elegans.